A 545-amino-acid polypeptide reads, in one-letter code: Toxin BC_0920 (545 aa).

One can recognise an LXG domain in the interval 1 to 217; the sequence is MSLNMYLGEV…ARQAANSIEE (217 aa).

The protein in the N-terminal section; belongs to the LXG family. This sequence in the C-terminal section; belongs to the bacterial EndoU family. Probably interacts with cognate immunity protein BC_0921. The interaction inhibits the toxic activity of BC_0921.

It localises to the secreted. Its function is as follows. Toxic component of an LXG toxin-immunity module. The C-terminus (residues 322-545) has RNase activity in E.coli which is neutralized by cognate immunity protein BC_0921, but not by immunity proteins specific to other toxins with the LXG domain. Degrades 5S rRNA and several tRNAs in vitro; cleavage is endonucleolytic within the anticodon loop for tRNA(GAU-Ile) and tRNA(UUC-Glu) but total for 5S rRNA and at least one other tRNA. RNase activity is suppressed by cognate immunity protein BC_0921. This chain is Toxin BC_0920, found in Bacillus cereus (strain ATCC 14579 / DSM 31 / CCUG 7414 / JCM 2152 / NBRC 15305 / NCIMB 9373 / NCTC 2599 / NRRL B-3711).